The following is a 436-amino-acid chain: Na(+)/H(+) antiporter NhaA (436 aa).

Helical transmembrane passes span 31–51 (VGGA…NSPG), 74–94 (LSLG…IAGL), 112–132 (IVPI…YTLI), 143–163 (GWAI…AVIS), 173–193 (FLLT…AVFY), 196–216 (NLQP…TWAV), 222–242 (SWYL…ESGV), 285–305 (VAVP…WAGF), 315–335 (IGII…ATFL), 350–370 (WIDV…SLLI), and 384–404 (HAKV…TVIL).

Belongs to the NhaA Na(+)/H(+) (TC 2.A.33) antiporter family.

The protein resides in the cell membrane. It carries out the reaction Na(+)(in) + 2 H(+)(out) = Na(+)(out) + 2 H(+)(in). Its function is as follows. Na(+)/H(+) antiporter that extrudes sodium in exchange for external protons. The protein is Na(+)/H(+) antiporter NhaA of Renibacterium salmoninarum (strain ATCC 33209 / DSM 20767 / JCM 11484 / NBRC 15589 / NCIMB 2235).